Here is a 24-residue protein sequence, read N- to C-terminus: uncharacterized protein (24 aa).

This is an uncharacterized protein from Schizosaccharomyces pombe (strain 972 / ATCC 24843) (Fission yeast).